Here is a 236-residue protein sequence, read N- to C-terminus: uncharacterized protein (236 aa).

This is an uncharacterized protein from Sus scrofa (Pig).